Reading from the N-terminus, the 431-residue chain is Histidinol dehydrogenase (431 aa).

NAD(+) contacts are provided by Tyr124, Gln187, and Asn210. Ser236, Gln258, and His261 together coordinate substrate. The Zn(2+) site is built by Gln258 and His261. Catalysis depends on proton acceptor residues Glu325 and His326. Substrate-binding residues include His326, Asp359, Glu413, and His418. Asp359 serves as a coordination point for Zn(2+). Residue His418 coordinates Zn(2+).

It belongs to the histidinol dehydrogenase family. The cofactor is Zn(2+).

It catalyses the reaction L-histidinol + 2 NAD(+) + H2O = L-histidine + 2 NADH + 3 H(+). The protein operates within amino-acid biosynthesis; L-histidine biosynthesis; L-histidine from 5-phospho-alpha-D-ribose 1-diphosphate: step 9/9. In terms of biological role, catalyzes the sequential NAD-dependent oxidations of L-histidinol to L-histidinaldehyde and then to L-histidine. This is Histidinol dehydrogenase from Legionella pneumophila subsp. pneumophila (strain Philadelphia 1 / ATCC 33152 / DSM 7513).